Reading from the N-terminus, the 536-residue chain is Proto-oncogene tyrosine-protein kinase Yrk (536 aa).

The N-myristoyl glycine moiety is linked to residue Gly-2. 2 S-palmitoyl cysteine lipidation sites follow: Cys-3 and Cys-6. Positions 10 to 36 (ISGKGQGGSGTGTPAHPPSQYDPDPTQ) are disordered. The SH3 domain maps to 81-142 (GGVTLFIALY…PSNYVAPVDS (62 aa)). Residues 148–245 (WYFGKIGRKD…GLCCRLAVPC (98 aa)) enclose the SH2 domain. Residues 270 to 523 (LQLLQKLGNG…YLQSFLEDYF (254 aa)) form the Protein kinase domain. ATP-binding positions include 276 to 284 (LGNGQFGEV) and Lys-298. Catalysis depends on Asp-389, which acts as the Proton acceptor. Phosphotyrosine; by autocatalysis is present on Tyr-419. Phosphotyrosine is present on Tyr-530.

Belongs to the protein kinase superfamily. Tyr protein kinase family. SRC subfamily. Post-translationally, phosphorylated. There are elevated levels of this protein in neural and hematopoietic tissues.

The catalysed reaction is L-tyrosyl-[protein] + ATP = O-phospho-L-tyrosyl-[protein] + ADP + H(+). Functionally, may participate in signaling pathways. This Gallus gallus (Chicken) protein is Proto-oncogene tyrosine-protein kinase Yrk (YRK).